The following is a 261-amino-acid chain: 5'-nucleotidase SurE (261 aa).

Residues Asp-8, Asp-9, Ser-40, and Asn-94 each coordinate a divalent metal cation.

The protein belongs to the SurE nucleotidase family. The cofactor is a divalent metal cation.

The protein resides in the cytoplasm. It catalyses the reaction a ribonucleoside 5'-phosphate + H2O = a ribonucleoside + phosphate. Functionally, nucleotidase that shows phosphatase activity on nucleoside 5'-monophosphates. The sequence is that of 5'-nucleotidase SurE from Anaplasma marginale (strain Florida).